The sequence spans 154 residues: Insulin-like growth factor 1 (154 aa).

The b stretch occupies residues glycine 50–threonine 78. Intrachain disulfides connect cysteine 55-cysteine 97, cysteine 67-cysteine 110, and cysteine 96-cysteine 101. The interval glycine 79–threonine 90 is c. The tract at residues glycine 91–alanine 111 is a. The interval proline 112–alanine 119 is d. Positions arginine 120–methionine 154 are cleaved as a propeptide — e peptide. A disordered region spans residues serine 121–methionine 154. The segment covering arginine 126 to leucine 139 has biased composition (basic and acidic residues). Positions lysine 140–methionine 154 are enriched in polar residues.

Belongs to the insulin family. Forms a ternary complex with IGFR1 and ITGAV:ITGB3. Forms a ternary complex with IGFR1 and ITGA6:ITGB4. Forms a ternary complex with IGFBP3 and ALS.

It localises to the secreted. Functionally, the insulin-like growth factors, isolated from plasma, are structurally and functionally related to insulin but have a much higher growth-promoting activity. May be a physiological regulator of [1-14C]-2-deoxy-D-glucose (2DG) transport and glycogen synthesis in osteoblasts. Stimulates glucose transport in bone-derived osteoblastic (PyMS) cells and is effective at much lower concentrations than insulin, not only regarding glycogen and DNA synthesis but also with regard to enhancing glucose uptake. May play a role in synapse maturation. Ca(2+)-dependent exocytosis of IGF1 is required for sensory perception of smell in the olfactory bulb. Acts as a ligand for IGF1R. Binds to the alpha subunit of IGF1R, leading to the activation of the intrinsic tyrosine kinase activity which autophosphorylates tyrosine residues in the beta subunit thus initiating a cascade of down-stream signaling events leading to activation of the PI3K-AKT/PKB and the Ras-MAPK pathways. Binds to integrins ITGAV:ITGB3 and ITGA6:ITGB4. Its binding to integrins and subsequent ternary complex formation with integrins and IGFR1 are essential for IGF1 signaling. Induces the phosphorylation and activation of IGFR1, MAPK3/ERK1, MAPK1/ERK2 and AKT1. As part of the MAPK/ERK signaling pathway, acts as a negative regulator of apoptosis in cardiomyocytes via promotion of STUB1/CHIP-mediated ubiquitination and degradation of ICER-type isoforms of CREM. This chain is Insulin-like growth factor 1, found in Ovis aries (Sheep).